Consider the following 111-residue polypeptide: Nucleoid-associated protein NMCC_1355 (111 aa).

The protein belongs to the YbaB/EbfC family. In terms of assembly, homodimer.

The protein resides in the cytoplasm. Its subcellular location is the nucleoid. Functionally, binds to DNA and alters its conformation. May be involved in regulation of gene expression, nucleoid organization and DNA protection. This chain is Nucleoid-associated protein NMCC_1355, found in Neisseria meningitidis serogroup C (strain 053442).